A 273-amino-acid polypeptide reads, in one-letter code: Rhamnulose-1-phosphate aldolase (273 aa).

Residue glutamate 117 is part of the active site. Residues histidine 140, histidine 142, and histidine 211 each contribute to the Zn(2+) site.

Belongs to the aldolase class II family. RhaD subfamily. The cofactor is Zn(2+).

It is found in the cytoplasm. The catalysed reaction is L-rhamnulose 1-phosphate = (S)-lactaldehyde + dihydroxyacetone phosphate. It functions in the pathway carbohydrate degradation; L-rhamnose degradation; glycerone phosphate from L-rhamnose: step 3/3. Catalyzes the reversible cleavage of L-rhamnulose-1-phosphate to dihydroxyacetone phosphate (DHAP) and L-lactaldehyde. This Listeria monocytogenes serotype 4b (strain F2365) protein is Rhamnulose-1-phosphate aldolase.